The chain runs to 653 residues: Bifunctional lysine-specific demethylase and histidyl-hydroxylase NO66 (653 aa).

A compositionally biased stretch (low complexity) spans 1 to 12 (MKKATTSAAAKS). Disordered regions lie at residues 1-50 (MKKA…DMLA) and 65-137 (FDDD…LERT). Polar residues predominate over residues 13-26 (QGNSKMQKNANNGT). A Phosphoserine modification is found at serine 44. A compositionally biased stretch (low complexity) spans 72–86 (STSKKTQSGSAAAAK). The residue at position 131 (serine 131) is a Phosphoserine. The residue at position 137 (threonine 137) is a Phosphothreonine. Serine 138 carries the post-translational modification Phosphoserine. Positions 184–208 (AEPTEEGNNNNDEKETETIETHKAD) are disordered. Residues 194-208 (NDEKETETIETHKAD) are compositionally biased toward basic and acidic residues. One can recognise a JmjC domain in the interval 300-450 (FYSDGCSIRL…NLLETLMPMV (151 aa)). Positions 351, 353, and 416 each coordinate Fe cation.

The protein belongs to the ROX family. NO66 subfamily. It depends on Fe(2+) as a cofactor.

Its subcellular location is the nucleus. It carries out the reaction N(6),N(6)-dimethyl-L-lysyl(36)-[histone H3] + 2 2-oxoglutarate + 2 O2 = L-lysyl(36)-[histone H3] + 2 formaldehyde + 2 succinate + 2 CO2. Its function is as follows. Oxygenase that can act as both a histone lysine demethylase and a ribosomal histidine hydroxylase. Specifically demethylates 'Lys-4' (H3K4me) and 'Lys-36' (H3K36me) of histone H3, thereby playing a central role in histone code. The protein is Bifunctional lysine-specific demethylase and histidyl-hydroxylase NO66 of Drosophila melanogaster (Fruit fly).